The following is a 101-amino-acid chain: Small ribosomal subunit protein bS6 (101 aa).

The protein belongs to the bacterial ribosomal protein bS6 family.

Binds together with bS18 to 16S ribosomal RNA. This is Small ribosomal subunit protein bS6 from Pseudarthrobacter chlorophenolicus (strain ATCC 700700 / DSM 12829 / CIP 107037 / JCM 12360 / KCTC 9906 / NCIMB 13794 / A6) (Arthrobacter chlorophenolicus).